The chain runs to 553 residues: Membrane protein insertase YidC (553 aa).

Residues 3-23 traverse the membrane as a helical segment; the sequence is IKRTILWVIFSLSVVLLFDNW. Residues 44-64 form a disordered region; the sequence is AAAPGGTPAGDVPKAAAPAAA. 4 consecutive transmembrane segments (helical) span residues 359–379, 429–449, 467–487, and 507–527; these read LLGN…LVFF, LGGC…YWVL, LASP…MFVQ, and PIAF…YWVV.

It belongs to the OXA1/ALB3/YidC family. Type 1 subfamily. Interacts with the Sec translocase complex via SecD. Specifically interacts with transmembrane segments of nascent integral membrane proteins during membrane integration.

The protein localises to the cell inner membrane. Required for the insertion and/or proper folding and/or complex formation of integral membrane proteins into the membrane. Involved in integration of membrane proteins that insert both dependently and independently of the Sec translocase complex, as well as at least some lipoproteins. Aids folding of multispanning membrane proteins. The chain is Membrane protein insertase YidC from Ralstonia nicotianae (strain ATCC BAA-1114 / GMI1000) (Ralstonia solanacearum).